The primary structure comprises 64 residues: Small ribosomal subunit protein bS21 (64 aa).

The segment at 37–64 (EKPSVKRKRKEKEAQRRLRKKMRMMKKA) is disordered. Over residues 53–64 (RLRKKMRMMKKA) the composition is skewed to basic residues.

Belongs to the bacterial ribosomal protein bS21 family.

This Syntrophotalea carbinolica (strain DSM 2380 / NBRC 103641 / GraBd1) (Pelobacter carbinolicus) protein is Small ribosomal subunit protein bS21.